We begin with the raw amino-acid sequence, 207 residues long: MTSSVRIVGDPSRFAEQLVSSIAEHVESRVREALEAARKIVERAYEESASKLESELRRALREAEEQVQAYTAKREVELRKRLAEIRAKAVEEIMSVALQRLREYVGLEAYKEFIKRLLDSALETASRRSRRVIVHPARPDQAIVAELAPRVAAEKGIEVEVGEAVEGAGGFTVRAVEAGLTLDYRLEVILAPALEEARARVLEVLNQ.

The protein belongs to the V-ATPase E subunit family. Has multiple subunits with at least A(3), B(3), C, D, E, F, H, I and proteolipid K(x).

The protein localises to the cell membrane. Functionally, component of the A-type ATP synthase that produces ATP from ADP in the presence of a proton gradient across the membrane. The polypeptide is A-type ATP synthase subunit E (Hyperthermus butylicus (strain DSM 5456 / JCM 9403 / PLM1-5)).